The primary structure comprises 895 residues: Isoleucine--tRNA ligase (895 aa).

Positions 57-67 (PYANGSIHVGH) match the 'HIGH' region motif. Glu549 is a binding site for L-isoleucyl-5'-AMP. Residues 590 to 594 (KMSKS) carry the 'KMSKS' region motif. Lys593 contributes to the ATP binding site. Positions 869, 872, 888, and 891 each coordinate Zn(2+).

The protein belongs to the class-I aminoacyl-tRNA synthetase family. IleS type 1 subfamily. In terms of assembly, monomer. The cofactor is Zn(2+).

It is found in the cytoplasm. The enzyme catalyses tRNA(Ile) + L-isoleucine + ATP = L-isoleucyl-tRNA(Ile) + AMP + diphosphate. Functionally, catalyzes the attachment of isoleucine to tRNA(Ile). As IleRS can inadvertently accommodate and process structurally similar amino acids such as valine, to avoid such errors it has two additional distinct tRNA(Ile)-dependent editing activities. One activity is designated as 'pretransfer' editing and involves the hydrolysis of activated Val-AMP. The other activity is designated 'posttransfer' editing and involves deacylation of mischarged Val-tRNA(Ile). The chain is Isoleucine--tRNA ligase from Mycoplasma genitalium (strain ATCC 33530 / DSM 19775 / NCTC 10195 / G37) (Mycoplasmoides genitalium).